A 273-amino-acid polypeptide reads, in one-letter code: Exosome complex component Rrp42 (273 aa).

The protein belongs to the RNase PH family. Rrp42 subfamily. In terms of assembly, component of the archaeal exosome complex. Forms a hexameric ring-like arrangement composed of 3 Rrp41-Rrp42 heterodimers. The hexameric ring associates with a trimer of Rrp4 and/or Csl4 subunits.

Its subcellular location is the cytoplasm. Its function is as follows. Non-catalytic component of the exosome, which is a complex involved in RNA degradation. Contributes to the structuring of the Rrp41 active site. In Thermococcus gammatolerans (strain DSM 15229 / JCM 11827 / EJ3), this protein is Exosome complex component Rrp42.